We begin with the raw amino-acid sequence, 380 residues long: Glucose-1-phosphate adenylyltransferase (380 aa).

Residues G164, 179–180 (EK), and S190 each bind alpha-D-glucose 1-phosphate.

It belongs to the bacterial/plant glucose-1-phosphate adenylyltransferase family. In terms of assembly, homotetramer.

It carries out the reaction alpha-D-glucose 1-phosphate + ATP + H(+) = ADP-alpha-D-glucose + diphosphate. It functions in the pathway glycan biosynthesis; glycogen biosynthesis. Functionally, involved in the biosynthesis of ADP-glucose, a building block required for the elongation reactions to produce glycogen. Catalyzes the reaction between ATP and alpha-D-glucose 1-phosphate (G1P) to produce pyrophosphate and ADP-Glc. The polypeptide is Glucose-1-phosphate adenylyltransferase (Lactococcus lactis subsp. cremoris (strain SK11)).